The sequence spans 466 residues: ATP synthase subunit beta, sodium ion specific (466 aa).

153 to 160 (GGAGVGKT) contributes to the ATP binding site.

It belongs to the ATPase alpha/beta chains family. F-type ATPases have 2 components, CF(1) - the catalytic core - and CF(0) - the membrane proton channel. CF(1) has five subunits: alpha(3), beta(3), gamma(1), delta(1), epsilon(1). CF(0) has three main subunits: a, b and c.

It is found in the cell membrane. It catalyses the reaction 4 Na(+)(in) + ATP + H2O = 4 Na(+)(out) + ADP + phosphate + H(+). Inhibited by nitrate. Produces ATP from ADP in the presence of a sodium ion gradient across the membrane. The beta chain is the catalytic subunit. The protein is ATP synthase subunit beta, sodium ion specific of Acetobacterium woodii (strain ATCC 29683 / DSM 1030 / JCM 2381 / KCTC 1655 / WB1).